The chain runs to 239 residues: Heptaprenylglyceryl phosphate synthase (239 aa).

K12 is a binding site for sn-glycerol 1-phosphate. Residues D14 and T40 each coordinate Mg(2+). Sn-glycerol 1-phosphate-binding positions include 159 to 164, G189, and 209 to 210; these read YLEYSG and GN.

This sequence belongs to the GGGP/HepGP synthase family. Group I subfamily. As to quaternary structure, homodimer. Requires Mg(2+) as cofactor.

It carries out the reaction sn-glycerol 1-phosphate + all-trans-heptaprenyl diphosphate = 3-heptaprenyl-sn-glycero-1-phosphate + diphosphate. Its pathway is membrane lipid metabolism; glycerophospholipid metabolism. Its function is as follows. Prenyltransferase that catalyzes in vivo the transfer of the heptaprenyl moiety of heptaprenyl pyrophosphate (HepPP; 35 carbon atoms) to the C3 hydroxyl of sn-glycerol-1-phosphate (G1P), producing heptaprenylglyceryl phosphate (HepGP). This reaction is an ether-bond-formation step in the biosynthesis of archaea-type G1P-based membrane lipids found in Bacillales. The chain is Heptaprenylglyceryl phosphate synthase from Geobacillus thermodenitrificans (strain NG80-2).